Reading from the N-terminus, the 1480-residue chain is Heme-responsive zinc finger transcription factor HAP1 (1480 aa).

The segment covering 1–50 (MSNTPYNSSVPSIASMTQSSVSRSPNMHTATTPGANTSSNSPPLHMSSDS) has biased composition (polar residues). A disordered region spans residues 1–56 (MSNTPYNSSVPSIASMTQSSVSRSPNMHTATTPGANTSSNSPPLHMSSDSSKIKRK). Zn(2+) contacts are provided by Cys-64, Cys-67, Cys-74, Cys-81, Cys-84, and Cys-93. The segment at residues 64 to 93 (CTICRKRKVKCDKLRPHCQQCTKTGVAHLC) is a DNA-binding region (zn(2)-C6 fungal-type). Residues 105 to 134 (EKELLKDNELKKLRERVKSLEKTLSKVHSS) adopt a coiled-coil conformation. Residues 126-208 (KTLSKVHSSP…ANSSSLSISN (83 aa)) are disordered. Residues 130–142 (KVHSSPSSNSLKS) show a composition bias toward low complexity. 2 stretches are compositionally biased toward polar residues: residues 143-152 (YNTPESSNLF) and 160-176 (TLVNANTGSASSASHMH). Over residues 177–208 (QQQQQQQQQEQQQDFSRSANANANSSSLSISN) the composition is skewed to low complexity. Positions 244–441 (KGDPYLKLLW…NTIPHHQPQS (198 aa)) are heme-responsive; required for HMC formation. 6 HRM repeats span residues 280-285 (KCPINH), 296-301 (KCPVDH), 320-325 (KCPVDH), 344-349 (RCPVDH), 386-391 (KCPVDH), and 412-417 (RCPIDH). 2 stretches are compositionally biased toward polar residues: residues 429–444 (STHNTIPHHQPQSGSH) and 703–731 (QLNATIPATSQDVSNNGSKKANPSTNPTL). Disordered stretches follow at residues 429-456 (STHNTIPHHQPQSGSHARSHPAQSRKHD) and 703-764 (QLNA…KENQ). Over residues 732–756 (NNNMSAATTNSSSRSGSADSRSGSN) the composition is skewed to low complexity. An HRM 7 repeat occupies 1189-1194 (KCPVYQ). The disordered stretch occupies residues 1381–1408 (TANTDTSANGSALSTLTSPQGSDLASNS). The span at 1385–1408 (DTSANGSALSTLTSPQGSDLASNS) shows a compositional bias: polar residues.

In terms of assembly, binds DNA as a homodimer. Interacts with SRO9 and YDJ1. In the absence of heme, binds to at least four cellular proteins, including YDJ1 and SRO9, forming a high-molecular-weight complex (HMC) which results in repression of its activity and dictates its DNA-binding specificity.

The protein localises to the nucleus. Regulation of oxygen dependent gene expression. It modulates the expression of Iso-1 (CYP1) and Iso-2 (CYP3) cytochrome c. In response to heme, promotes transcription of genes encoding functions required for respiration, controlling oxidative damage and repression of anaerobic genes. Binds to the sequence 5'-CGGNNNTNNCGG-3'. Is non-functional in terms of iso-1 cytochrome c expression in strain S288c and its derivatives. The sequence is that of Heme-responsive zinc finger transcription factor HAP1 (HAP1) from Saccharomyces cerevisiae (strain Kyokai no. 7 / NBRC 101557) (Baker's yeast).